The following is a 101-amino-acid chain: Small ribosomal subunit protein uS14 (101 aa).

The protein belongs to the universal ribosomal protein uS14 family. As to quaternary structure, part of the 30S ribosomal subunit. Contacts proteins S3 and S10.

Binds 16S rRNA, required for the assembly of 30S particles and may also be responsible for determining the conformation of the 16S rRNA at the A site. The chain is Small ribosomal subunit protein uS14 from Idiomarina loihiensis (strain ATCC BAA-735 / DSM 15497 / L2-TR).